A 413-amino-acid chain; its full sequence is MTLNPAPNSFRTGPDERGRFGIFGGRFVAETLMPLILDLEKAYAEAKADPSFKADMESYGTHYIGRPSPLYYAERLTEHLRASAPAGQGAKIYFKREELNHTGSHKVNNVLGQILLARRMGKPRIIAETGAGQHGVATATLCARFGLKCVVYMGAVDVERQAPNVFRMKMLGAEVVPVQSGTRTLKDAMNEALRDWVTNVADTFYCIGTVAGPHPYPAMVRDFQSVIGIETKQQMLALEGRLPDSLVACIGGGSNAMGLFHPFLDDREVEIYGVEAAGHGVQSGLHAASLTGGRPGVLHGNRTYLLMNEDGQIADAHSISAGLDYPGIGPEHAWLHEMGRVTYLSATDTETLEAFKLCSMLEGIIPALEPAHALSKVLELAPTKPAEHLMVMNLSGRGDKDIPQVAQIFGQTL.

An N6-(pyridoxal phosphate)lysine modification is found at lysine 106.

It belongs to the TrpB family. Tetramer of two alpha and two beta chains. It depends on pyridoxal 5'-phosphate as a cofactor.

It carries out the reaction (1S,2R)-1-C-(indol-3-yl)glycerol 3-phosphate + L-serine = D-glyceraldehyde 3-phosphate + L-tryptophan + H2O. Its pathway is amino-acid biosynthesis; L-tryptophan biosynthesis; L-tryptophan from chorismate: step 5/5. Functionally, the beta subunit is responsible for the synthesis of L-tryptophan from indole and L-serine. This chain is Tryptophan synthase beta chain, found in Methylorubrum populi (strain ATCC BAA-705 / NCIMB 13946 / BJ001) (Methylobacterium populi).